Consider the following 245-residue polypeptide: tRNA pseudouridine synthase A (245 aa).

The Nucleophile role is filled by Asp52. Position 110 (Tyr110) interacts with substrate.

It belongs to the tRNA pseudouridine synthase TruA family. Homodimer.

The enzyme catalyses uridine(38/39/40) in tRNA = pseudouridine(38/39/40) in tRNA. Its function is as follows. Formation of pseudouridine at positions 38, 39 and 40 in the anticodon stem and loop of transfer RNAs. In Borrelia hermsii (strain HS1 / DAH), this protein is tRNA pseudouridine synthase A.